We begin with the raw amino-acid sequence, 999 residues long: MLYCLILLLCLSSTYLPSLSLNQDATILRQAKLGLSDPAQSLSSWSDNNDVTPCKWLGVSCDATSNVVSVDLSSFMLVGPFPSILCHLPSLHSLSLYNNSINGSLSADDFDTCHNLISLDLSENLLVGSIPKSLPFNLPNLKFLEISGNNLSDTIPSSFGEFRKLESLNLAGNFLSGTIPASLGNVTTLKELKLAYNLFSPSQIPSQLGNLTELQVLWLAGCNLVGPIPPSLSRLTSLVNLDLTFNQLTGSIPSWITQLKTVEQIELFNNSFSGELPESMGNMTTLKRFDASMNKLTGKIPDNLNLLNLESLNLFENMLEGPLPESITRSKTLSELKLFNNRLTGVLPSQLGANSPLQYVDLSYNRFSGEIPANVCGEGKLEYLILIDNSFSGEISNNLGKCKSLTRVRLSNNKLSGQIPHGFWGLPRLSLLELSDNSFTGSIPKTIIGAKNLSNLRISKNRFSGSIPNEIGSLNGIIEISGAENDFSGEIPESLVKLKQLSRLDLSKNQLSGEIPRELRGWKNLNELNLANNHLSGEIPKEVGILPVLNYLDLSSNQFSGEIPLELQNLKLNVLNLSYNHLSGKIPPLYANKIYAHDFIGNPGLCVDLDGLCRKITRSKNIGYVWILLTIFLLAGLVFVVGIVMFIAKCRKLRALKSSTLAASKWRSFHKLHFSEHEIADCLDEKNVIGFGSSGKVYKVELRGGEVVAVKKLNKSVKGGDDEYSSDSLNRDVFAAEVETLGTIRHKSIVRLWCCCSSGDCKLLVYEYMPNGSLADVLHGDRKGGVVLGWPERLRIALDAAEGLSYLHHDCVPPIVHRDVKSSNILLDSDYGAKVADFGIAKVGQMSGSKTPEAMSGIAGSCGYIAPEYVYTLRVNEKSDIYSFGVVLLELVTGKQPTDSELGDKDMAKWVCTALDKCGLEPVIDPKLDLKFKEEISKVIHIGLLCTSPLPLNRPSMRKVVIMLQEVSGAVPCSSPNTSKRSKTGGKLSPYYTEDLNSV.

A signal peptide spans 1 to 14 (MLYCLILLLCLSST). Residues 15–621 (YLPSLSLNQD…LCRKITRSKN (607 aa)) are Extracellular-facing. 5 LRR repeats span residues 90–112 (SLHS…DFDT), 115–137 (NLIS…LPFN), 140–161 (NLKF…SFGE), 164–186 (KLES…LGNV), and 188–208 (TLKE…PSQL). N98 and N102 each carry an N-linked (GlcNAc...) asparagine glycan. Residues N150 and N185 are each glycosylated (N-linked (GlcNAc...) asparagine). N210 carries N-linked (GlcNAc...) asparagine glycosylation. 2 LRR repeats span residues 213-236 (ELQV…SRLT) and 237-259 (SLVN…ITQL). 2 N-linked (GlcNAc...) asparagine glycosylation sites follow: N269 and N282. LRR repeat units lie at residues 285–307 (TLKR…LNLL), 308–330 (NLES…ITRS), 332–353 (TLSE…QLGA), 356–378 (PLQY…VCGE), 380–402 (KLEY…LGKC), 404–427 (SLTR…WGLP), 428–450 (RLSL…IIGA), 452–474 (NLSN…IGSL), 500–523 (QLSR…RGWK), 524–546 (NLNE…VGIL), 548–569 (VLNY…ELQN), and 571–593 (KLNV…YANK). Residue N452 is glycosylated (N-linked (GlcNAc...) asparagine). Residue N576 is glycosylated (N-linked (GlcNAc...) asparagine). A helical transmembrane segment spans residues 622-641 (IGYVWILLTIFLLAGLVFVV). Topologically, residues 642-999 (GIVMFIAKCR…PYYTEDLNSV (358 aa)) are cytoplasmic. The Protein kinase domain maps to 683–968 (LDEKNVIGFG…KVVIMLQEVS (286 aa)). ATP contacts are provided by residues 689-697 (IGFGSSGKV) and K711. 2 positions are modified to phosphotyrosine: Y766 and Y806. Catalysis depends on D819, which acts as the Proton acceptor. S856 is modified (phosphoserine). 2 positions are modified to phosphotyrosine: Y864 and Y871. T872 bears the Phosphothreonine mark. The tract at residues 972–999 (PCSSPNTSKRSKTGGKLSPYYTEDLNSV) is disordered.

It belongs to the protein kinase superfamily. Ser/Thr protein kinase family. Interacts with CST. Binds to IDA. Mg(2+) is required as a cofactor. Requires Mn(2+) as cofactor. In terms of processing, autophosphorylated on Ser, Thr and Tyr residues. Expressed in roots and rosettes. Expressed at the base of petioles and pedicels, and in the abscission zones of the floral organs.

The protein resides in the cell membrane. It catalyses the reaction L-seryl-[protein] + ATP = O-phospho-L-seryl-[protein] + ADP + H(+). It carries out the reaction L-threonyl-[protein] + ATP = O-phospho-L-threonyl-[protein] + ADP + H(+). The enzyme catalyses L-tyrosyl-[protein] + ATP = O-phospho-L-tyrosyl-[protein] + ADP + H(+). In terms of biological role, receptor with a dual specificity kinase activity acting on both serine/threonine- and tyrosine-containing substrates that controls floral organ abscission. May interact with the 'INFLORESCENCE DEFICIENT IN ABSCISSION' (IDA) ligands family. The protein is Receptor-like protein kinase 5 (RLK5) of Arabidopsis thaliana (Mouse-ear cress).